The sequence spans 156 residues: Transmembrane inner ear expressed protein (156 aa).

The first 27 residues, 1–27 (MAGWPGAGPLCVLGGAALGVCLAGVAG), serve as a signal peptide directing secretion. Residues 28 to 57 (QLVEPSTAPPKPKPPPLTKETVVFWDMRLW) lie on the Extracellular side of the membrane. The helical transmembrane segment at 58 to 78 (HVVGIFSLFVLSIIITLCCVF) threads the bilayer. Residues 79 to 156 (NCRVPRTRKE…NEAKKKKGEK (78 aa)) are Cytoplasmic-facing. The segment at 113 to 135 (NELTEVPGEDKKKKKKKKKDSVD) is disordered.

In terms of assembly, forms the MET channel composed of TMC (TMC1 or TMC2), TMIE, TOMT, CIB (CIB2 or CIB3), LHPL5 and PCDH15. In terms of tissue distribution, expressed in many tissues.

It is found in the membrane. Auxiliary subunit of the mechanotransducer (MET) non-specific cation channel complex located at the tips of stereocilia of cochlear hair cells and that mediates sensory transduction in the auditory system. The MET complex is composed of two dimeric pore-forming ion-conducting transmembrane TMC (TMC1 or TMC2) subunits, and aided by several auxiliary proteins including LHFPL5, TMIE, CIB2/3 and TOMT, and the tip-link PCDH15. May contribute to the formation of the pore. The sequence is that of Transmembrane inner ear expressed protein (TMIE) from Homo sapiens (Human).